The sequence spans 555 residues: Glutamine--tRNA ligase (555 aa).

The 'HIGH' region motif lies at 35-45 (PEPNGYLHIGH). ATP contacts are provided by residues 36–38 (EPN) and 42–48 (HIGHAKS). L-glutamine contacts are provided by aspartate 68 and tyrosine 213. ATP is bound by residues threonine 232 and 262–263 (RL). The 'KMSKS' region signature appears at 269–273 (ITSKR).

The protein belongs to the class-I aminoacyl-tRNA synthetase family. As to quaternary structure, monomer.

Its subcellular location is the cytoplasm. It carries out the reaction tRNA(Gln) + L-glutamine + ATP = L-glutaminyl-tRNA(Gln) + AMP + diphosphate. The polypeptide is Glutamine--tRNA ligase (Azotobacter vinelandii (strain DJ / ATCC BAA-1303)).